Here is a 232-residue protein sequence, read N- to C-terminus: tRNA (guanine-N(1)-)-methyltransferase (232 aa).

Residues G108 and 128-133 (IGDFIM) contribute to the S-adenosyl-L-methionine site.

The protein belongs to the RNA methyltransferase TrmD family. In terms of assembly, homodimer.

The protein localises to the cytoplasm. The enzyme catalyses guanosine(37) in tRNA + S-adenosyl-L-methionine = N(1)-methylguanosine(37) in tRNA + S-adenosyl-L-homocysteine + H(+). Specifically methylates guanosine-37 in various tRNAs. This chain is tRNA (guanine-N(1)-)-methyltransferase, found in Campylobacter fetus subsp. fetus (strain 82-40).